Here is a 143-residue protein sequence, read N- to C-terminus: Protein STIG1 (143 aa).

Positions 1–23 are cleaved as a signal peptide; it reads MDFIILLIAILALSSTPITIISG. The interval 76 to 87 is sufficient for PI(4)P binding; that stretch reads RTCCFNYFCVDL. The interval 80 to 83 is sufficient for binding to the extracellular domain of PRK2; sequence FNYF. Residues 88–115 are sufficient for PI(3)P binding; it reads FTNRFNCGSCGLVCIVGTRCCGGICVDI.

It belongs to the STIG1 family. As to quaternary structure, interacts with PRK1 and PRK2 (via extracellular domain). In terms of tissue distribution, expressed in the stigma and the upper section of the style.

The protein localises to the secreted. It localises to the extracellular space. It is found in the apoplast. Its function is as follows. Promotes pollen tube growth. A C-terminal peptide is cleaved from the propeptide in the stigmatic exudate and represent the major form of STIG1. Binds phosphoinositol lipids. The binding of external phosphatidylinositol 3-phosphate (PI(3)P) and PRK2 by STIG1 induces a rapid intracellular reactive oxygen species elevation. The protein is Protein STIG1 of Solanum lycopersicum (Tomato).